Here is a 153-residue protein sequence, read N- to C-terminus: 6,7-dimethyl-8-ribityllumazine synthase (153 aa).

5-amino-6-(D-ribitylamino)uracil-binding positions include Trp22, 56-58, and 80-82; these read SYE and AVI. A (2S)-2-hydroxy-3-oxobutyl phosphate-binding site is contributed by 85–86; it reads AT. The active-site Proton donor is the His88. Position 113 (Leu113) interacts with 5-amino-6-(D-ribitylamino)uracil. Arg127 serves as a coordination point for (2S)-2-hydroxy-3-oxobutyl phosphate.

This sequence belongs to the DMRL synthase family.

The enzyme catalyses (2S)-2-hydroxy-3-oxobutyl phosphate + 5-amino-6-(D-ribitylamino)uracil = 6,7-dimethyl-8-(1-D-ribityl)lumazine + phosphate + 2 H2O + H(+). Its pathway is cofactor biosynthesis; riboflavin biosynthesis; riboflavin from 2-hydroxy-3-oxobutyl phosphate and 5-amino-6-(D-ribitylamino)uracil: step 1/2. In terms of biological role, catalyzes the formation of 6,7-dimethyl-8-ribityllumazine by condensation of 5-amino-6-(D-ribitylamino)uracil with 3,4-dihydroxy-2-butanone 4-phosphate. This is the penultimate step in the biosynthesis of riboflavin. This is 6,7-dimethyl-8-ribityllumazine synthase from Herpetosiphon aurantiacus (strain ATCC 23779 / DSM 785 / 114-95).